Consider the following 789-residue polypeptide: Protein FLOWERING LOCUS D (789 aa).

A disordered region spans residues 1 to 23 (MVSFSAPKKRRRGRSQRSMSSLN). Positions 76–177 (NKEATTEALL…FGIAQAIKDK (102 aa)) constitute an SWIRM domain. Residues S195, E214, R216, R222, and 240-243 (GGSV) each bind FAD. K287 participates in a covalent cross-link: Glycyl lysine isopeptide (Lys-Gly) (interchain with G-Cter in SUMO). FAD contacts are provided by residues E595, 604 to 605 (TM), and 607 to 612 (GAFVTG). Glycyl lysine isopeptide (Lys-Gly) (interchain with G-Cter in SUMO) cross-links involve residues K693 and K770.

The protein belongs to the flavin monoamine oxidase family. As to quaternary structure, interacts with HDA6. FAD is required as a cofactor. Sumoylated at Lys-287, Lys-693 and Lys-770 by SIZ1. Sumoylation alters its activity and the histone H4 acetylation status of FLC locus, promoting FLC expression.

Functionally, probable histone demethylase that promotes flowering independently of the photoperiod and vernalization pathways by repressing FLOWERING LOCUS C (FLC), a floral repressor that blocks the transition from vegetative to reproductive development. Probably mediates histone H3 'Lys-4' demethylation at FLC locus. Seems to act in partial redundancy with LDL1 and LDL2 to repress FLC expression. Required for histone H4 deacetylation of FLC locus. May be a component of the histone deacetylase complex. Forms a histone deacetylase complex with HDA5, HDA6 and MSI4/FVE that represses FLC gene expression to control flowering time. Required for systemic acquired resistance (SAR) toward pathogenic bacteria (e.g. Pseudomonas syringae pv tomato DC3000 (avrPto)). Together with FLD and MSI4/FVE, contributes to dehydroabietinal-dependent (DA, a diterpenoid tricyclic diterpene) activation of flowering ans SAR. In Arabidopsis thaliana (Mouse-ear cress), this protein is Protein FLOWERING LOCUS D.